The chain runs to 70 residues: Prokaryotic ubiquitin-like protein UBact (70 aa).

2 stretches are compositionally biased toward basic and acidic residues: residues 1–15 (MPDQ…RKQG) and 24–50 (TRHD…RDPG). The interval 1 to 70 (MPDQRQQERS…RQQRREQSGE (70 aa)) is disordered. Glu-70 is covalently cross-linked (Isoglutamyl lysine isopeptide (Glu-Lys) (interchain with K-? in acceptor proteins)).

It belongs to the ubiquitin-like protein UBact family.

May function as a protein modifier covalently attached to lysine residues of substrate proteins. This may serve to target the modified proteins for degradation by proteasomes. This Terrybacteria sp. (strain RIFCSPHIGHO2_01_FULL_58_15) protein is Prokaryotic ubiquitin-like protein UBact.